The chain runs to 252 residues: UPF0246 protein Fjoh_4905 (252 aa).

Belongs to the UPF0246 family.

The chain is UPF0246 protein Fjoh_4905 from Flavobacterium johnsoniae (strain ATCC 17061 / DSM 2064 / JCM 8514 / BCRC 14874 / CCUG 350202 / NBRC 14942 / NCIMB 11054 / UW101) (Cytophaga johnsonae).